The primary structure comprises 179 residues: Translation initiation factor IF-3 (179 aa).

It belongs to the IF-3 family. In terms of assembly, monomer.

The protein localises to the cytoplasm. Functionally, IF-3 binds to the 30S ribosomal subunit and shifts the equilibrium between 70S ribosomes and their 50S and 30S subunits in favor of the free subunits, thus enhancing the availability of 30S subunits on which protein synthesis initiation begins. The protein is Translation initiation factor IF-3 of Leptospira borgpetersenii serovar Hardjo-bovis (strain L550).